The sequence spans 199 residues: NAD(P)H quinone oxidoreductase PST3 (199 aa).

Residues 5-193 enclose the Flavodoxin-like domain; the sequence is VAIIIYSLYH…EIAFIQGKSF (189 aa). FMN-binding positions include 11–15 and 111–165; these read SLYHH and IFVS…SPYG.

The protein belongs to the WrbA family. The cofactor is FMN.

The protein resides in the cell membrane. It catalyses the reaction a quinone + NADH + H(+) = a quinol + NAD(+). The enzyme catalyses a quinone + NADPH + H(+) = a quinol + NADP(+). In terms of biological role, flavodoxin-like protein (FLP) that plays a role in cell wall integrity, oxidative stress protection and virulence. FLPs act as NAD(P)H quinone oxidoreductases. Reduces ubiquinone (coenzyme Q), enabling it to serve as an antioxidant in the membrane. The sequence is that of NAD(P)H quinone oxidoreductase PST3 from Candida albicans (strain SC5314 / ATCC MYA-2876) (Yeast).